The primary structure comprises 306 residues: Acetylglutamate kinase (306 aa).

Substrate is bound by residues 79–80 (GG), Arg101, and Asn203.

Belongs to the acetylglutamate kinase family. ArgB subfamily.

It localises to the cytoplasm. The catalysed reaction is N-acetyl-L-glutamate + ATP = N-acetyl-L-glutamyl 5-phosphate + ADP. Its pathway is amino-acid biosynthesis; L-arginine biosynthesis; N(2)-acetyl-L-ornithine from L-glutamate: step 2/4. Its function is as follows. Catalyzes the ATP-dependent phosphorylation of N-acetyl-L-glutamate. The polypeptide is Acetylglutamate kinase (Polaromonas naphthalenivorans (strain CJ2)).